We begin with the raw amino-acid sequence, 266 residues long: Phosphatidate cytidylyltransferase (266 aa).

The next 8 helical transmembrane spans lie at 16–36 (VVLIVVAGLILYADNLLLFWA), 52–72 (LFQVKASFSLYLILVLSWVAA), 78–98 (PVECALISAMVMASVIAYQKA), 101–121 (SEAILPFLYPGVGFFALFGVY), 125–145 (GAVAIIWLLVVVVASDVGAFF), 164–184 (LEGALIGVVLASVLGSFVGMG), 186–206 (LSGGFLMALLFSFLIALMAVF), and 237–257 (LDSMLFGALSLHVLLYFLEIW).

This sequence belongs to the CDS family.

It localises to the cell inner membrane. The catalysed reaction is a 1,2-diacyl-sn-glycero-3-phosphate + CTP + H(+) = a CDP-1,2-diacyl-sn-glycerol + diphosphate. The protein operates within phospholipid metabolism; CDP-diacylglycerol biosynthesis; CDP-diacylglycerol from sn-glycerol 3-phosphate: step 3/3. The polypeptide is Phosphatidate cytidylyltransferase (cdsA) (Helicobacter pylori (strain J99 / ATCC 700824) (Campylobacter pylori J99)).